A 163-amino-acid chain; its full sequence is Nucleotide-binding protein AM1_1863 (163 aa).

It belongs to the YajQ family.

In terms of biological role, nucleotide-binding protein. The sequence is that of Nucleotide-binding protein AM1_1863 from Acaryochloris marina (strain MBIC 11017).